The sequence spans 825 residues: Putative pentatricopeptide repeat-containing protein At2g01510 (825 aa).

17 PPR repeats span residues 47 to 77, 78 to 108, 109 to 143, 146 to 180, 183 to 213, 214 to 248, 249 to 283, 284 to 314, 315 to 349, 350 to 384, 385 to 415, 416 to 450, 451 to 485, 486 to 516, 517 to 551, 552 to 587, and 588 to 618; these read DTCR…MPHK, NTVS…MPDR, TVVT…SSCT, DHVT…GFDT, FLTV…IPEK, DSVT…GHQP, SDFT…GFSR, DASV…MPEL, DFVS…GFDR, RNFP…TADS, ILHV…LPQR, TTVS…NLRA, DQST…GNLE, NVFS…MPDR, NAVS…GLQP, DSVS…GITP, and KKKH…MPFE. Residues 623–699 are type E motif; sequence MWSSVLNACR…VPAYSWVEVN (77 aa). The interval 700–730 is type E(+) motif; that stretch reads HKIHVFSSNDQTHPNGDEIVRKINELTAEIE. The type DYW motif stretch occupies residues 731–825; that stretch reads REGYKPDTSS…EGVCSCGDYW (95 aa).

It belongs to the PPR family. PCMP-H subfamily.

In Arabidopsis thaliana (Mouse-ear cress), this protein is Putative pentatricopeptide repeat-containing protein At2g01510 (PCMP-H36).